We begin with the raw amino-acid sequence, 99 residues long: UPF0125 protein BU253 (99 aa).

Belongs to the UPF0125 (RnfH) family.

The polypeptide is UPF0125 protein BU253 (Buchnera aphidicola subsp. Acyrthosiphon pisum (strain APS) (Acyrthosiphon pisum symbiotic bacterium)).